We begin with the raw amino-acid sequence, 153 residues long: Phosphoribosyl-AMP cyclohydrolase (153 aa).

Mg(2+) is bound at residue D93. C94 is a binding site for Zn(2+). Mg(2+)-binding residues include D95 and D97. The Zn(2+) site is built by C112 and C119.

This sequence belongs to the PRA-CH family. As to quaternary structure, homodimer. The cofactor is Mg(2+). Zn(2+) is required as a cofactor.

The protein resides in the cytoplasm. The enzyme catalyses 1-(5-phospho-beta-D-ribosyl)-5'-AMP + H2O = 1-(5-phospho-beta-D-ribosyl)-5-[(5-phospho-beta-D-ribosylamino)methylideneamino]imidazole-4-carboxamide. It functions in the pathway amino-acid biosynthesis; L-histidine biosynthesis; L-histidine from 5-phospho-alpha-D-ribose 1-diphosphate: step 3/9. Catalyzes the hydrolysis of the adenine ring of phosphoribosyl-AMP. This chain is Phosphoribosyl-AMP cyclohydrolase, found in Mesorhizobium japonicum (strain LMG 29417 / CECT 9101 / MAFF 303099) (Mesorhizobium loti (strain MAFF 303099)).